Here is a 102-residue protein sequence, read N- to C-terminus: Small ribosomal subunit protein uS10 (102 aa).

Residues glutamine 34–lysine 59 are disordered.

This sequence belongs to the universal ribosomal protein uS10 family. In terms of assembly, part of the 30S ribosomal subunit.

Involved in the binding of tRNA to the ribosomes. In Methanopyrus kandleri (strain AV19 / DSM 6324 / JCM 9639 / NBRC 100938), this protein is Small ribosomal subunit protein uS10.